The sequence spans 159 residues: UPF0336 protein MAP_4107 (159 aa).

The protein belongs to the UPF0336 family.

This Mycolicibacterium paratuberculosis (strain ATCC BAA-968 / K-10) (Mycobacterium paratuberculosis) protein is UPF0336 protein MAP_4107.